A 284-amino-acid chain; its full sequence is NAD kinase (284 aa).

The active-site Proton acceptor is D67. NAD(+) contacts are provided by residues 67 to 68 (DG), 141 to 142 (ND), R152, K169, D171, 182 to 187 (TGYSLS), and Q241.

Belongs to the NAD kinase family. The cofactor is a divalent metal cation.

It localises to the cytoplasm. It catalyses the reaction NAD(+) + ATP = ADP + NADP(+) + H(+). Functionally, involved in the regulation of the intracellular balance of NAD and NADP, and is a key enzyme in the biosynthesis of NADP. Catalyzes specifically the phosphorylation on 2'-hydroxyl of the adenosine moiety of NAD to yield NADP. This is NAD kinase from Geotalea daltonii (strain DSM 22248 / JCM 15807 / FRC-32) (Geobacter daltonii).